Consider the following 372-residue polypeptide: Alanine dehydrogenase 2 (372 aa).

H95 is a catalytic residue. 169 to 199 (KVTIIGGGQAGTNAAKIALGLGADVTILDVN) serves as a coordination point for NAD(+).

The protein belongs to the AlaDH/PNT family.

The enzyme catalyses L-alanine + NAD(+) + H2O = pyruvate + NH4(+) + NADH + H(+). The protein operates within amino-acid degradation; L-alanine degradation via dehydrogenase pathway; NH(3) and pyruvate from L-alanine: step 1/1. In terms of biological role, may play a role in cell wall synthesis as L-alanine is an important constituent of the peptidoglycan layer. The polypeptide is Alanine dehydrogenase 2 (ald2) (Staphylococcus aureus (strain N315)).